The primary structure comprises 176 residues: 3-hydroxyanthranilate 3,4-dioxygenase (176 aa).

O2 is bound at residue Arg-44. Fe cation contacts are provided by His-48, Glu-54, and His-92. A substrate-binding site is contributed by Glu-54. Residues Arg-96 and Glu-106 each coordinate substrate. Fe cation is bound by residues Cys-121, Cys-124, Cys-158, and Cys-161.

Belongs to the 3-HAO family. As to quaternary structure, homodimer. The cofactor is Fe(2+).

It carries out the reaction 3-hydroxyanthranilate + O2 = (2Z,4Z)-2-amino-3-carboxymuconate 6-semialdehyde. The protein operates within cofactor biosynthesis; NAD(+) biosynthesis; quinolinate from L-kynurenine: step 3/3. In terms of biological role, catalyzes the oxidative ring opening of 3-hydroxyanthranilate to 2-amino-3-carboxymuconate semialdehyde, which spontaneously cyclizes to quinolinate. The protein is 3-hydroxyanthranilate 3,4-dioxygenase of Xanthomonas euvesicatoria pv. vesicatoria (strain 85-10) (Xanthomonas campestris pv. vesicatoria).